A 538-amino-acid chain; its full sequence is uncharacterized protein (538 aa).

The N-terminal stretch at 1–17 is a signal peptide; the sequence is MSFSATILFSPPSGSEA. Positions 101 to 131 are disordered; it reads RQGKVSIPDEDGESRAHSSPPEEPGPLKESP. Residues lysine 128 and lysine 221 each participate in a glycyl lysine isopeptide (Lys-Gly) (interchain with G-Cter in SUMO2) cross-link. Residue serine 224 is modified to Phosphoserine. Residues 233–253 are disordered; that stretch reads RATPETGPENGTKLPPPRPED. Phosphoserine occurs at positions 285 and 428. The segment at 488–523 is disordered; sequence LPPELYNPNFQEEEDEGGDENAPGSPSFDQPHKTCC.

It localises to the secreted. This is an uncharacterized protein from Homo sapiens (Human).